Here is a 472-residue protein sequence, read N- to C-terminus: DEAD-box ATP-dependent RNA helicase 58, chloroplastic (472 aa).

The N-terminal 54 residues, methionine 1 to valine 54, are a transit peptide targeting the chloroplast. The Q motif motif lies at arginine 76 to arginine 104. In terms of domain architecture, Helicase ATP-binding spans leucine 107–arginine 286. Alanine 120–threonine 127 provides a ligand contact to ATP. A DEAD box motif is present at residues aspartate 231 to aspartate 234. Residues asparagine 314 to leucine 472 form the Helicase C-terminal domain.

The protein belongs to the DEAD box helicase family.

The protein resides in the plastid. It is found in the chloroplast. It carries out the reaction ATP + H2O = ADP + phosphate + H(+). The sequence is that of DEAD-box ATP-dependent RNA helicase 58, chloroplastic (RH58) from Arabidopsis thaliana (Mouse-ear cress).